The primary structure comprises 669 residues: Hypoxia-inducible factor 3-alpha (669 aa).

The interval 1 to 27 (MALGLQRARSTTELRKEKSRDAARSRR) is disordered. Residues 10-27 (STTELRKEKSRDAARSRR) are compositionally biased toward basic and acidic residues. The bHLH domain maps to 14 to 67 (LRKEKSRDAARSRRSQETEVLYQLAHTLPFARGVSAHLDKASIMRLTISYLRMH). Residues 77-100 (QVGAGGEPLDACYLKALEGFVMVL) form a nuclear localization signal region. PAS domains follow at residues 82–154 (GEPL…LSRR) and 227–297 (PHPG…LSKG). The nuclear export signal stretch occupies residues 230–274 (GSLEPPLGRGAFLSRHSLDMKFTYCDDRIAEVAGYSPDDLIGCSA). The segment at 354–389 (EQTEQHSRRPIQRGAPSQKDTPNPGDSLDTPGPRIL) is disordered. Positions 414–418 (LRRLL) match the LRRLL motif. The segment covering 430 to 444 (TPSTPLATRHPQSPL) has biased composition (polar residues). A disordered region spans residues 430–451 (TPSTPLATRHPQSPLSADLPDE). Positions 452 to 581 (LPVGTENVHR…TLAQSSEDED (130 aa)) are ODD. Positions 454–506 (VGTENVHRLFTSGKDTEAVETDLDIAQDADALDLEMLAPYISMDDDFQLNASE) are NTAD. Lys-467 participates in a covalent cross-link: Glycyl lysine isopeptide (Lys-Gly) (interchain with G-Cter in ubiquitin). The LAPYISMD signature appears at 490-497 (LAPYISMD). 4-hydroxyproline is present on Pro-492. 2 disordered regions span residues 523 to 600 (RARS…SPEH) and 619 to 669 (APGS…AQAD). Composition is skewed to low complexity over residues 530–541 (LSPPALEPSLLP) and 550–564 (SCSS…ASSP). Lys-570 participates in a covalent cross-link: Glycyl lysine isopeptide (Lys-Gly) (interchain with G-Cter in ubiquitin). A compositionally biased stretch (low complexity) spans 629–646 (PLLNLNEPLGLGPSLLSP).

Isoform 2 interacts (via ODD domain) with VHL (via beta domain). Isoform 4 interacts with HIF1A; the interaction inhibits the binding of HIF1A to hypoxia-responsive element (HRE) and HIF1A/ARNT-dependent transcriptional activation. Isoform 4 interacts with ARNT; the interaction occurs in a HIF1A- and DNA-binding-independent manner and does not induce HIF1A/ARNT-dependent transcriptional activation. Isoform 4 interacts with EPAS1. Interacts with BAD, BCL2L2 and MCL1. In normoxia, hydroxylated on Pro-492 in the oxygen-dependent degradation domain (ODD) by prolyl hydroxylase(s) (PHD). The hydroxylated proline promotes interaction with VHL, initiating rapid ubiquitination and subsequent proteasomal degradation. In terms of processing, ubiquitinated; ubiquitination occurs in a VHL- and oxygen-dependent pathway and subsequently targeted for proteasomal degradation. As to expression, expressed in vascular cells (at protein level). Expressed in kidney. Expressed in lung epithelial cells. Expressed in endothelial cells (venous and arterial cells from umbilical cord and aortic endothelial cells) and in vascular smooth muscle cells (aorta). Strongly expressed in the heart, placenta, and skeletal muscle, whereas a weak expression profile was found in the lung, liver, and kidney. Expressed weakly in cell renal cell carcinoma (CC-RCC) compared to normal renal cells. Expression is down-regulated in numerous kidney tumor cells compared to non tumor kidney tissues. Isoform 2 is expressed in heart, placenta, lung, liver, skeletal muscle and pancreas and in numerous cancer cell lines. Isoform 3 and isoform 4 are weakly expressed in heart, placenta, lung, liver, skeletal muscle and pancreas. Isoform 4 is expressed in fetal tissues, such as heart, brain, thymus, lung, liver, skeletal kidney and spleen. Isoform 3 is weakly expressed in fetal tissues, such as liver and kidney.

The protein localises to the nucleus. It localises to the cytoplasm. Its subcellular location is the nucleus speckle. The protein resides in the mitochondrion. Its function is as follows. Acts as a transcriptional regulator in adaptive response to low oxygen tension. Acts as a regulator of hypoxia-inducible gene expression. Functions as an inhibitor of angiogenesis in hypoxic cells of the cornea. Plays a role in the development of the cardiorespiratory system. May also be involved in apoptosis. Attenuates the ability of transcription factor HIF1A to bind to hypoxia-responsive elements (HRE) located within the enhancer/promoter of hypoxia-inducible target genes and hence inhibits HRE-driven transcriptional activation. Also inhibits hypoxia-inducible ARNT-mediated gene expression. In terms of biological role, attenuates the ability of transcription factor HIF1A to bind to hypoxia-responsive elements (HRE) located within the enhancer/promoter of hypoxia-inducible target genes and hence inhibits HRE-driven transcriptional activation. Functionally, attenuates the ability of transcription factor HIF1A and EPAS1/HIF2A to bind to hypoxia-responsive elements (HRE) located within the enhancer/promoter of hypoxia-inducible target genes and hence inhibits HRE-driven transcriptional activation. May act as a tumor suppressor and inhibits malignant cell transformation. The sequence is that of Hypoxia-inducible factor 3-alpha from Homo sapiens (Human).